Reading from the N-terminus, the 83-residue chain is Cytochrome b559 subunit alpha (83 aa).

The helical transmembrane segment at 21 to 35 (VIHSITIPSLFIAGW) threads the bilayer. His23 is a binding site for heme.

Belongs to the PsbE/PsbF family. In terms of assembly, heterodimer of an alpha subunit and a beta subunit. PSII is composed of 1 copy each of membrane proteins PsbA, PsbB, PsbC, PsbD, PsbE, PsbF, PsbH, PsbI, PsbJ, PsbK, PsbL, PsbM, PsbT, PsbX, PsbY, PsbZ, Psb30/Ycf12, at least 3 peripheral proteins of the oxygen-evolving complex and a large number of cofactors. It forms dimeric complexes. Heme b serves as cofactor.

It is found in the plastid. The protein localises to the chloroplast thylakoid membrane. This b-type cytochrome is tightly associated with the reaction center of photosystem II (PSII). PSII is a light-driven water:plastoquinone oxidoreductase that uses light energy to abstract electrons from H(2)O, generating O(2) and a proton gradient subsequently used for ATP formation. It consists of a core antenna complex that captures photons, and an electron transfer chain that converts photonic excitation into a charge separation. This is Cytochrome b559 subunit alpha from Helianthus annuus (Common sunflower).